A 152-amino-acid polypeptide reads, in one-letter code: Aspartate 1-decarboxylase (152 aa).

Serine 24 serves as the catalytic Schiff-base intermediate with substrate; via pyruvic acid. Serine 24 bears the Pyruvic acid (Ser) mark. Threonine 56 provides a ligand contact to substrate. Tyrosine 57 (proton donor) is an active-site residue. 72-74 serves as a coordination point for substrate; the sequence is GAA.

It belongs to the PanD family. As to quaternary structure, heterooctamer of four alpha and four beta subunits. Requires pyruvate as cofactor. Is synthesized initially as an inactive proenzyme, which is activated by self-cleavage at a specific serine bond to produce a beta-subunit with a hydroxyl group at its C-terminus and an alpha-subunit with a pyruvoyl group at its N-terminus.

It localises to the cytoplasm. The catalysed reaction is L-aspartate + H(+) = beta-alanine + CO2. It participates in cofactor biosynthesis; (R)-pantothenate biosynthesis; beta-alanine from L-aspartate: step 1/1. Catalyzes the pyruvoyl-dependent decarboxylation of aspartate to produce beta-alanine. The sequence is that of Aspartate 1-decarboxylase from Methylobacterium nodulans (strain LMG 21967 / CNCM I-2342 / ORS 2060).